A 256-amino-acid chain; its full sequence is Hydroxypyruvate/pyruvate aldolase (256 aa).

Catalysis depends on histidine 48, which acts as the Proton acceptor. Residues glutamate 152 and aspartate 178 each contribute to the a divalent metal cation site.

The protein belongs to the HpcH/HpaI aldolase family. A divalent metal cation is required as a cofactor.

It catalyses the reaction D-glyceraldehyde + pyruvate = 2-dehydro-3-deoxy-L-galactonate. Its function is as follows. Aldolase which can catalyze in vitro the aldolisation reaction between hydroxypyruvate (HPA) or pyruvate (PA) and D-glyceraldehyde (D-GA). The condensation of pyruvate and D-glyceraldehyde produces 2-dehydro-3-deoxy-L-galactonate as the major product. Has weak activity with hydroxypyruvate and D-glyceraldehyde. This Roseobacter denitrificans (strain ATCC 33942 / OCh 114) (Erythrobacter sp. (strain OCh 114)) protein is Hydroxypyruvate/pyruvate aldolase.